A 157-amino-acid polypeptide reads, in one-letter code: Probable succinate transporter subunit YjjB (157 aa).

Helical transmembrane passes span 10-30, 55-75, 87-107, and 129-149; these read LAQD…VFNV, AGFN…SIGI, IFTV…TAMI, and FLKA…PGLW.

Belongs to the ThrE exporter (TC 2.A.79) family. As to quaternary structure, the transporter is composed of YjjB and YjjP.

The protein localises to the cell inner membrane. Functionally, involved in succinate export with YjjP. Both proteins are required for export. Participates in succinate export, but also in the export of other dicarboxylates, such as fumarate and malate. Contributes to succinate production under both aerobic and anaerobic conditions, and increases fumarate and malate production during anaerobic succinate production. This chain is Probable succinate transporter subunit YjjB, found in Klebsiella aerogenes (strain ATCC 13048 / DSM 30053 / CCUG 1429 / JCM 1235 / KCTC 2190 / NBRC 13534 / NCIMB 10102 / NCTC 10006 / CDC 819-56) (Enterobacter aerogenes).